The following is a 251-amino-acid chain: Hydroxyacylglutathione hydrolase (251 aa).

7 residues coordinate Zn(2+): His-53, His-55, Asp-57, His-58, His-110, Asp-127, and His-165.

It belongs to the metallo-beta-lactamase superfamily. Glyoxalase II family. Monomer. The cofactor is Zn(2+).

The catalysed reaction is an S-(2-hydroxyacyl)glutathione + H2O = a 2-hydroxy carboxylate + glutathione + H(+). Its pathway is secondary metabolite metabolism; methylglyoxal degradation; (R)-lactate from methylglyoxal: step 2/2. Functionally, thiolesterase that catalyzes the hydrolysis of S-D-lactoyl-glutathione to form glutathione and D-lactic acid. The polypeptide is Hydroxyacylglutathione hydrolase (Salmonella paratyphi A (strain ATCC 9150 / SARB42)).